Here is a 300-residue protein sequence, read N- to C-terminus: Phosphatidylserine decarboxylase proenzyme (300 aa).

Active-site charge relay system; for autoendoproteolytic cleavage activity residues include Asp-117, His-173, and Ser-260. Catalysis depends on Ser-260, which acts as the Schiff-base intermediate with substrate; via pyruvic acid; for decarboxylase activity. Pyruvic acid (Ser); by autocatalysis is present on Ser-260.

This sequence belongs to the phosphatidylserine decarboxylase family. PSD-B subfamily. Prokaryotic type II sub-subfamily. In terms of assembly, heterodimer of a large membrane-associated beta subunit and a small pyruvoyl-containing alpha subunit. Requires pyruvate as cofactor. Post-translationally, is synthesized initially as an inactive proenzyme. Formation of the active enzyme involves a self-maturation process in which the active site pyruvoyl group is generated from an internal serine residue via an autocatalytic post-translational modification. Two non-identical subunits are generated from the proenzyme in this reaction, and the pyruvate is formed at the N-terminus of the alpha chain, which is derived from the carboxyl end of the proenzyme. The autoendoproteolytic cleavage occurs by a canonical serine protease mechanism, in which the side chain hydroxyl group of the serine supplies its oxygen atom to form the C-terminus of the beta chain, while the remainder of the serine residue undergoes an oxidative deamination to produce ammonia and the pyruvoyl prosthetic group on the alpha chain. During this reaction, the Ser that is part of the protease active site of the proenzyme becomes the pyruvoyl prosthetic group, which constitutes an essential element of the active site of the mature decarboxylase.

The protein resides in the cell membrane. It carries out the reaction a 1,2-diacyl-sn-glycero-3-phospho-L-serine + H(+) = a 1,2-diacyl-sn-glycero-3-phosphoethanolamine + CO2. Its pathway is phospholipid metabolism; phosphatidylethanolamine biosynthesis; phosphatidylethanolamine from CDP-diacylglycerol: step 2/2. Catalyzes the formation of phosphatidylethanolamine (PtdEtn) from phosphatidylserine (PtdSer). The chain is Phosphatidylserine decarboxylase proenzyme from Fusobacterium nucleatum subsp. nucleatum (strain ATCC 25586 / DSM 15643 / BCRC 10681 / CIP 101130 / JCM 8532 / KCTC 2640 / LMG 13131 / VPI 4355).